Reading from the N-terminus, the 388-residue chain is Calreticulin (388 aa).

A signal peptide spans 1 to 17 (MQLSLLVGLVCFSAINA). Cys103 and Cys135 are disulfide-bonded. Positions 107, 109, 126, and 133 each coordinate an alpha-D-glucoside. A run of 7 repeats spans residues 189–200 (AESGELEADWDF), 208–219 (DPDAKKPEDWDE), 225–236 (DEDDKKPEDWDK), 242–253 (DPDAKKPEDWDD), 257–267 (GEWEPPMVDNP), 271–281 (GEWKPKQKKNP), and 285–295 (GKWIHPEIEIP). Residues 189-253 (AESGELEADW…DAKKPEDWDD (65 aa)) are 4 X approximate repeats. The tract at residues 193–282 (ELEADWDFLP…WKPKQKKNPA (90 aa)) is disordered. Residues 205–215 (KIKDPDAKKPE) are compositionally biased toward basic and acidic residues. A compositionally biased stretch (acidic residues) spans 216–227 (DWDEREFIDDED). Residues 228–249 (DKKPEDWDKPEHIPDPDAKKPE) are compositionally biased toward basic and acidic residues. The span at 250–259 (DWDDEMDGEW) shows a compositional bias: acidic residues. The 3 X approximate repeats stretch occupies residues 257–295 (GEWEPPMVDNPEYKGEWKPKQKKNPAYKGKWIHPEIEIP). Asp315 provides a ligand contact to an alpha-D-glucoside. The tract at residues 349-388 (REGEKKKGKKTKKQKKKEKNEKIKKEKMKKRKRANRKKKK) is disordered. Basic residues-rich tracts occupy residues 354–365 (KKGKKTKKQKKK) and 373–388 (KEKM…KKKK).

It belongs to the calreticulin family.

The protein resides in the endoplasmic reticulum lumen. In terms of biological role, molecular calcium-binding chaperone promoting folding, oligomeric assembly and quality control in the ER via the calreticulin/calnexin cycle. This lectin may interact transiently with almost all of the monoglucosylated glycoproteins that are synthesized in the ER. The protein is Calreticulin (crt-1) of Onchocerca volvulus.